Reading from the N-terminus, the 202-residue chain is Peptidyl-tRNA hydrolase (202 aa).

A tRNA-binding site is contributed by Y17. Catalysis depends on H22, which acts as the Proton acceptor. TRNA is bound by residues F76, N78, and N124.

This sequence belongs to the PTH family. As to quaternary structure, monomer.

It localises to the cytoplasm. It carries out the reaction an N-acyl-L-alpha-aminoacyl-tRNA + H2O = an N-acyl-L-amino acid + a tRNA + H(+). Functionally, hydrolyzes ribosome-free peptidyl-tRNAs (with 1 or more amino acids incorporated), which drop off the ribosome during protein synthesis, or as a result of ribosome stalling. In terms of biological role, catalyzes the release of premature peptidyl moieties from peptidyl-tRNA molecules trapped in stalled 50S ribosomal subunits, and thus maintains levels of free tRNAs and 50S ribosomes. The protein is Peptidyl-tRNA hydrolase of Nitratidesulfovibrio vulgaris (strain DSM 19637 / Miyazaki F) (Desulfovibrio vulgaris).